The chain runs to 204 residues: Holliday junction branch migration complex subunit RuvA (204 aa).

The interval 1 to 64 is domain I; it reads MIGRLRGTLI…EDAQLLYGFN (64 aa). The domain II stretch occupies residues 65–143; sequence TVSERALFRE…GWGAGDLFTP (79 aa). Residues 144 to 155 are flexible linker; the sequence is ATDAAPVDSTPV. Residues 156–204 are domain III; sequence IAQNAQEEAMSALLALGYKPPQASKAVSQVAKAGMSSEELIREALKSMV.

It belongs to the RuvA family. In terms of assembly, homotetramer. Forms an RuvA(8)-RuvB(12)-Holliday junction (HJ) complex. HJ DNA is sandwiched between 2 RuvA tetramers; dsDNA enters through RuvA and exits via RuvB. An RuvB hexamer assembles on each DNA strand where it exits the tetramer. Each RuvB hexamer is contacted by two RuvA subunits (via domain III) on 2 adjacent RuvB subunits; this complex drives branch migration. In the full resolvosome a probable DNA-RuvA(4)-RuvB(12)-RuvC(2) complex forms which resolves the HJ.

It is found in the cytoplasm. Functionally, the RuvA-RuvB-RuvC complex processes Holliday junction (HJ) DNA during genetic recombination and DNA repair, while the RuvA-RuvB complex plays an important role in the rescue of blocked DNA replication forks via replication fork reversal (RFR). RuvA specifically binds to HJ cruciform DNA, conferring on it an open structure. The RuvB hexamer acts as an ATP-dependent pump, pulling dsDNA into and through the RuvAB complex. HJ branch migration allows RuvC to scan DNA until it finds its consensus sequence, where it cleaves and resolves the cruciform DNA. The sequence is that of Holliday junction branch migration complex subunit RuvA from Vibrio cholerae serotype O1 (strain ATCC 39541 / Classical Ogawa 395 / O395).